The chain runs to 200 residues: ATP-dependent Clp protease proteolytic subunit (200 aa).

The active-site Nucleophile is S103. Residue H128 is part of the active site.

Belongs to the peptidase S14 family. In terms of assembly, fourteen ClpP subunits assemble into 2 heptameric rings which stack back to back to give a disk-like structure with a central cavity, resembling the structure of eukaryotic proteasomes.

It is found in the cytoplasm. It carries out the reaction Hydrolysis of proteins to small peptides in the presence of ATP and magnesium. alpha-casein is the usual test substrate. In the absence of ATP, only oligopeptides shorter than five residues are hydrolyzed (such as succinyl-Leu-Tyr-|-NHMec, and Leu-Tyr-Leu-|-Tyr-Trp, in which cleavage of the -Tyr-|-Leu- and -Tyr-|-Trp bonds also occurs).. Functionally, cleaves peptides in various proteins in a process that requires ATP hydrolysis. Has a chymotrypsin-like activity. Plays a major role in the degradation of misfolded proteins. In Vibrio parahaemolyticus serotype O3:K6 (strain RIMD 2210633), this protein is ATP-dependent Clp protease proteolytic subunit.